The primary structure comprises 292 residues: Tissue factor (292 aa).

A signal peptide spans 1–35; sequence MATPNGPRVPCPQAAVARALLFGLVLIQGAGVAGT. Residues 36–248 are Extracellular-facing; that stretch reads TDVVVAYNIT…TSHEKVLSTE (213 aa). The N-linked (GlcNAc...) asparagine glycan is linked to Asn43. The short motif at 46 to 48 is the WKS motif element; sequence WKS. Cysteines 81 and 89 form a disulfide. 2 N-linked (GlcNAc...) asparagine glycosylation sites follow: Asn153 and Asn181. A disulfide bond links Cys215 and Cys238. A helical transmembrane segment spans residues 249 to 271; it reads LFFIIGTVMLVIIIFIVVLSVSL. Residues 272–292 lie on the Cytoplasmic side of the membrane; that stretch reads HKCRKVRAERSGKENTPLNAA. Residue Cys274 is the site of S-palmitoyl cysteine attachment.

It belongs to the tissue factor family. As to quaternary structure, interacts with HSPE; the interaction, inhibited by heparin, promotes the generation of activated factor X and activates coagulation in the presence of activated factor VII.

The protein resides in the membrane. Initiates blood coagulation by forming a complex with circulating factor VII or VIIa. The [TF:VIIa] complex activates factors IX or X by specific limited proteolysis. TF plays a role in normal hemostasis by initiating the cell-surface assembly and propagation of the coagulation protease cascade. The chain is Tissue factor (F3) from Bos taurus (Bovine).